The following is a 325-amino-acid chain: Protein ORANGE-GREEN, chloroplastic (325 aa).

The N-terminal 54 residues, 1–54 (MDRVLVASYPINHLIRPHSFRIDYCWSTCFTSRLNSGKERQKLSSRWRWRSMAS), are a transit peptide targeting the chloroplast. Positions 53–71 (ASDSTDSSSSSSFAPSVES) are enriched in low complexity. The disordered stretch occupies residues 53-77 (ASDSTDSSSSSSFAPSVESDPSDKT). 2 helical membrane-spanning segments follow: residues 164 to 184 (LYYV…GLLA) and 217 to 237 (IVAS…VVEV). The interval 226-317 (VGVISALMVV…CTGMAMASEH (92 aa)) is CR-type-like. The CXXCXGXG motif repeat unit spans residues 248–255 (CKYCLGTG). Residues 259–266 (CARCSNTG) form a CXXCXXXG motif repeat. The CXXCXGXG motif repeat unit spans residues 292 to 299 (CQNCSGSG). A CXXCXXXG motif repeat occupies 303–310 (CPTCLCTG).

The protein belongs to the orange-like family.

It is found in the plastid. Its subcellular location is the chloroplast membrane. In terms of biological role, involved in chloroplast differentiation in fruit flesh. The chain is Protein ORANGE-GREEN, chloroplastic from Cucumis melo (Muskmelon).